Consider the following 352-residue polypeptide: C-X-C chemokine receptor type 4 (352 aa).

The segment at 1–21 (MEGISIYTSDNYTEEMGSGDY) is important for chemokine binding and signaling. The Extracellular portion of the chain corresponds to 1–38 (MEGISIYTSDNYTEEMGSGDYDSIKEPCFREENAHFNR). Tyr-7 bears the Sulfotyrosine mark. N-linked (GlcNAc...) asparagine glycosylation occurs at Asn-11. A Sulfotyrosine modification is found at Tyr-12. Ser-18 is a glycosylation site (O-linked (Xyl...) (chondroitin sulfate) serine). Residue Tyr-21 is modified to Sulfotyrosine. 2 cysteine pairs are disulfide-bonded: Cys-28–Cys-274 and Cys-109–Cys-186. A helical membrane pass occupies residues 39–63 (IFLPTIYSIIFLTGIVGNGLVILVM). At 64–77 (GYQKKLRSMTDKYR) the chain is on the cytoplasmic side. Residues 78–99 (LHLSVADLLFVITLPFWAVDAV) traverse the membrane as a helical segment. Positions 94-97 (WAVD) are chemokine binding. At 100 to 110 (ANWYFGNFLCK) the chain is on the extracellular side. The chain crosses the membrane as a helical span at residues 111–130 (AVHVIYTVNLYSSVLILAFI). Positions 113 to 117 (HVIYT) are chemokine binding. The Cytoplasmic segment spans residues 131-154 (SLDRYLAIVHATNSQKPRKLLAEK). The Important for signaling signature appears at 133–135 (DRY). The involved in dimerization; when bound to chemokine stretch occupies residues 135–147 (YLAIVHATNSQKP). A helical membrane pass occupies residues 155 to 174 (VVYVGVWIPALLLTIPDFIF). The Extracellular segment spans residues 175–195 (ASVSEADDRYICDRFYPNDLW). The interval 186-190 (CDRFY) is chemokine binding, important for signaling. Positions 191-210 (PNDLWVVVFQFQHIMVGLIL) are involved in dimerization. Residues 196–216 (VVVFQFQHIMVGLILPGIVIL) traverse the membrane as a helical segment. Over 217–241 (SCYCIIISKLSHSKGHQKRKALKTT) the chain is Cytoplasmic. Residues 242–261 (VILILAFFACWLPYYIGISI) form a helical membrane-spanning segment. Residues 262-282 (DSFILLEIIKQGCEFENTVHK) are Extracellular-facing. The involved in dimerization stretch occupies residues 266-268 (LLE). Residues 283 to 302 (WISITEALAFFHCCLNPILY) form a helical membrane-spanning segment. Topologically, residues 303–352 (AFLGAKFKTSAQHALTSVSRGSSLKILSKGKRGGHSSVSTESESSSFHSS) are cytoplasmic. 2 positions are modified to phosphoserine: Ser-319 and Ser-321. Phosphoserine; by PKC and GRK6 is present on residues Ser-324 and Ser-325. Residues 329 to 352 (LSKGKRGGHSSVSTESESSSFHSS) form a disordered region. Phosphoserine; by GRK6 is present on Ser-330. Lys-331 is covalently cross-linked (Glycyl lysine isopeptide (Lys-Gly) (interchain with G-Cter in ubiquitin)). The segment covering 337-352 (HSSVSTESESSSFHSS) has biased composition (low complexity). Ser-339 carries the phosphoserine; by GRK6 modification. 2 positions are modified to phosphoserine: Ser-348 and Ser-351.

Belongs to the G-protein coupled receptor 1 family. As to quaternary structure, monomer. Can form homodimers. Interacts with CD164. Interacts with ARRB2; the interaction is dependent on the C-terminal phosphorylation of CXCR4 and allows activation of MAPK1 and MAPK3. Interacts with ARR3; the interaction is dependent on the C-terminal phosphorylation of CXCR4 and modulates calcium mobilization. Interacts with RNF113A; the interaction, enhanced by CXCL12, promotes CXCR4 ubiquitination and subsequent degradation. Interacts (via the cytoplasmic C-terminal) with ITCH (via the WW domains I and II); the interaction, enhanced by CXCL12, promotes CXCR4 ubiquitination and leads to its degradation. Interacts with extracellular ubiquitin. Interacts with DBN1; this interaction is enhanced by antigenic stimulation. Following LPS binding, may form a complex with GDF5, HSP90AA1 and HSPA8. Phosphorylated on agonist stimulation. Rapidly phosphorylated on serine and threonine residues in the C-terminal. Phosphorylation at Ser-324 and Ser-325 leads to recruitment of ITCH, ubiquitination and protein degradation. In terms of processing, ubiquitinated after ligand binding, leading to its degradation. Ubiquitinated by ITCH at the cell membrane on agonist stimulation. The ubiquitin-dependent mechanism, endosomal sorting complex required for transport (ESCRT), then targets CXCR4 for lysosomal degradation. This process is dependent also on prior Ser-/Thr-phosphorylation in the C-terminal of CXCR4. Also binding of ARRB1 to STAM negatively regulates CXCR4 sorting to lysosomes though modulating ubiquitination of SFR5S. Post-translationally, sulfation is required for efficient binding of CXCL12/SDF-1alpha and promotes its dimerization. O- and N-glycosylated. N-glycosylation can mask coreceptor function. The O-glycosylation chondroitin sulfate attachment does not affect interaction with CXCL12/SDF-1alpha nor its coreceptor activity.

It localises to the cell membrane. The protein localises to the cell junction. Its subcellular location is the early endosome. The protein resides in the late endosome. It is found in the lysosome. In terms of biological role, receptor for the C-X-C chemokine CXCL12/SDF-1 that transduces a signal by increasing intracellular calcium ion levels and enhancing MAPK1/MAPK3 activation. Involved in the AKT signaling cascade. Plays a role in regulation of cell migration, e.g. during wound healing. Acts as a receptor for extracellular ubiquitin; leading to enhanced intracellular calcium ions and reduced cellular cAMP levels. Binds bacterial lipopolysaccharide (LPS) et mediates LPS-induced inflammatory response, including TNF secretion by monocytes. Involved in hematopoiesis and in cardiac ventricular septum formation. Also plays an essential role in vascularization of the gastrointestinal tract, probably by regulating vascular branching and/or remodeling processes in endothelial cells. Involved in cerebellar development. In the CNS, could mediate hippocampal-neuron survival. In Macaca fascicularis (Crab-eating macaque), this protein is C-X-C chemokine receptor type 4 (CXCR4).